The chain runs to 525 residues: Averantin hydroxylase (525 aa).

The helical transmembrane segment at 36–56 (VLATFVAGIGALLLWTLTTVF) threads the bilayer. Asparagine 315 carries N-linked (GlcNAc...) asparagine glycosylation. Position 462 (cysteine 462) interacts with heme.

Belongs to the cytochrome P450 family. It depends on heme as a cofactor.

Its subcellular location is the membrane. The catalysed reaction is (1'S)-averantin + reduced [NADPH--hemoprotein reductase] + O2 = (1'S,5'R)-5'-hydroxyaverantin + oxidized [NADPH--hemoprotein reductase] + H2O. It catalyses the reaction (1'S)-averantin + reduced [NADPH--hemoprotein reductase] + O2 = (1'S,5'S)-5'-hydroxyaverantin + oxidized [NADPH--hemoprotein reductase] + H2O + H(+). It functions in the pathway mycotoxin biosynthesis. Its function is as follows. Averantin hydroxylase; part of the fragmented gene cluster that mediates the biosynthesis of dothistromin (DOTH), a polyketide toxin very similar in structure to the aflatoxin precursor, versicolorin B. The first step of the pathway is the conversion of acetate to norsolorinic acid (NOR) and requires the fatty acid synthase subunits hexA and hexB, as well as the polyketide synthase pksA. PksA combines a hexanoyl starter unit and 7 malonyl-CoA extender units to synthesize the precursor NOR. The hexanoyl starter unit is provided to the acyl-carrier protein (ACP) domain by the fungal fatty acid synthase hexA/hexB. The second step is the conversion of NOR to averantin (AVN) and requires the norsolorinic acid ketoreductase nor1, which catalyzes the dehydration of norsolorinic acid to form (1'S)-averantin. The cytochrome P450 monooxygenase avnA then catalyzes the hydroxylation of AVN to 5'hydroxyaverantin (HAVN). The next step is performed by adhA that transforms HAVN to averufin (AVF). Averufin might then be converted to hydroxyversicolorone by cypX and avfA. Hydroxyversicolorone is further converted versiconal hemiacetal acetate (VHA) by moxY. VHA is then the substrate for the versiconal hemiacetal acetate esterase est1 to yield versiconal (VAL). Versicolorin B synthase vbsA then converts VAL to versicolorin B (VERB) by closing the bisfuran ring. Then, the activity of the versicolorin B desaturase verB leads to versicolorin A (VERA). DotB, a predicted chloroperoxidase, may perform epoxidation of the A-ring of VERA. Alternatively, a cytochrome P450, such as cypX or avnA could catalyze this step. It is also possible that another, uncharacterized, cytochrome P450 enzyme is responsible for this step. Opening of the epoxide could potentially be achieved by the epoxide hydrolase epoA. However, epoA seems not to be required for DOTH biosynthesis, but other epoxide hydrolases may have the ability to complement this hydrolysis. Alternatively, opening of the epoxide ring could be achieved non-enzymatically. The next step is the deoxygenation of ring A to yield the 5,8-dihydroxyanthraquinone which is most likely catalyzed by the NADPH dehydrogenase encoded by ver1. The last stages of DOTH biosynthesis are proposed to involve hydroxylation of the bisfuran. OrdB and norB might have oxidative roles here. An alternative possibility is that cytochrome P450 monoogenases such as avnA and cypX might perform these steps in addition to previously proposed steps. The polypeptide is Averantin hydroxylase (Dothistroma septosporum (strain NZE10 / CBS 128990) (Red band needle blight fungus)).